The primary structure comprises 140 residues: MSTNSFDGSIVSSYLTTRMPPWAGVRQNVMGSSIDGRPVLPANSTTLTYETVSGTPLETAASAAASAAAATARGIVTDFAFLSPLASSAASRSSARDDKLTALLAQLDSLTRELNVVSQQLLDLRQQVSALKASSPPNAV.

The stretch at 100 to 127 (LTALLAQLDSLTRELNVVSQQLLDLRQQ) forms a coiled coil.

Belongs to the adenoviridae hexon-interlacing protein family. Homotrimer. Interacts with hexon protein; this interaction tethers the hexons together. Self-interacts with adjacent proteins. Interacts with kinesin light chain KLC1; this interaction leads to capsid disruption at the nuclear pore complex during virus entry into host cell.

Its subcellular location is the virion. The protein resides in the host nucleus. Structural component of the virion that acts as a cement protein on the capsid exterior and forms triskelion structures consisting of three molecules that stabilize three hexon trimers at the center of each icosahedral facet and fixes the peripentonal hexons. Dispensable for assembly. During virus entry, recruits the anterograde motor kinesin-1 to the capsid docked at the nuclear pore complex thereby subjecting the docked capsid to a pulling force. The resulting tension leads to capsid disruption, dispersion of capsid fragments toward cell periphery and eventually viral DNA entry into the host nucleus. In Human adenovirus C serotype 5 (HAdV-5), this protein is Hexon-interlacing protein.